Consider the following 701-residue polypeptide: Elongation factor G (701 aa).

In terms of domain architecture, tr-type G spans 8–286 (DRVRNIGIIA…AVVLLLPSPL (279 aa)). GTP is bound by residues 17-24 (AHIDAGKT), 85-89 (DTPGH), and 139-142 (NKMD).

This sequence belongs to the TRAFAC class translation factor GTPase superfamily. Classic translation factor GTPase family. EF-G/EF-2 subfamily.

The protein resides in the cytoplasm. Functionally, catalyzes the GTP-dependent ribosomal translocation step during translation elongation. During this step, the ribosome changes from the pre-translocational (PRE) to the post-translocational (POST) state as the newly formed A-site-bound peptidyl-tRNA and P-site-bound deacylated tRNA move to the P and E sites, respectively. Catalyzes the coordinated movement of the two tRNA molecules, the mRNA and conformational changes in the ribosome. The sequence is that of Elongation factor G from Herpetosiphon aurantiacus (strain ATCC 23779 / DSM 785 / 114-95).